Consider the following 253-residue polypeptide: U1 small nuclear ribonucleoprotein A (253 aa).

Residues 23–102 (VTIYINNLNE…KPMRIQYAKT (80 aa)) enclose the RRM 1 domain. The interval 111–140 (DGTFVPRERRKRNDEKPEKKQKREQHHDVS) is disordered. Positions 179 to 253 (NILFVQNLPH…NQMLISYAKK (75 aa)) constitute an RRM 2 domain.

It belongs to the RRM U1 A/B'' family. Component of the spliceosome where it is associated with snRNP U1.

The protein resides in the nucleus. The protein localises to the nucleolus. Its function is as follows. Involved in nuclear pre-mRNA splicing. This chain is U1 small nuclear ribonucleoprotein A, found in Oryza sativa subsp. indica (Rice).